The sequence spans 350 residues: Olfactory receptor 52I2 (350 aa).

Residues 1–55 (MCQQILRDCILLIHHLCINRKKVSLVMLGPAYNHTMETPASFLLVGIPGLQSSHL) lie on the Extracellular side of the membrane. Asparagine 33 carries an N-linked (GlcNAc...) asparagine glycan. Residues 56-76 (WLAISLSAMYIIALLGNTIIV) traverse the membrane as a helical segment. The Cytoplasmic segment spans residues 77 to 84 (TAIWMDST). The chain crosses the membrane as a helical span at residues 85-105 (RHEPMYCFLCVLAAVDIVMAS). Residues 106 to 129 (SVVPKMVSIFCSGDSSISFSACFT) lie on the Extracellular side of the membrane. Cysteine 127 and cysteine 219 are joined by a disulfide. Residues 130–150 (QMFFVHLATAVETGLLLTMAF) traverse the membrane as a helical segment. At 151–169 (DRYVAICKPLHYKRILTPQ) the chain is on the cytoplasmic side. Residues 170 to 190 (VMLGMSMAITIRAIIAITPLS) form a helical membrane-spanning segment. Residues 191–226 (WMVSHLPFCGSNVVVHSYCEHIALARLACADPVPSS) lie on the Extracellular side of the membrane. A helical transmembrane segment spans residues 227 to 247 (LYSLIGSSLMVGSDVAFIAAS). Residues 248–267 (YILILKAVFGLSSKTAQLKA) are Cytoplasmic-facing. The chain crosses the membrane as a helical span at residues 268 to 288 (LSTCGSHVGVMALYYLPGMAS). Residues 289–304 (IYAAWLGQDVVPLHTQ) lie on the Extracellular side of the membrane. A helical transmembrane segment spans residues 305-325 (VLLADLYVIIPATLNPIIYGM). Over 326 to 350 (RTKQLRERIWSYLMHVLFDHSNLGS) the chain is Cytoplasmic.

This sequence belongs to the G-protein coupled receptor 1 family.

The protein resides in the cell membrane. Odorant receptor. The protein is Olfactory receptor 52I2 (OR52I2) of Homo sapiens (Human).